A 25-amino-acid chain; its full sequence is FRLDEEFQGPIASQVRRQFLFRPRN.

Residue Gln18 is modified to Pyrrolidone carboxylic acid. Asparagine amide is present on Asn25.

It belongs to the NmU family.

The protein resides in the secreted. Its function is as follows. Stimulates uterine smooth muscle contraction and causes selective vasoconstriction. This chain is Neuromedin-U-25 (NMU), found in Canis lupus familiaris (Dog).